Consider the following 237-residue polypeptide: Phosphoribosylaminoimidazole-succinocarboxamide synthase (237 aa).

Belongs to the SAICAR synthetase family.

The catalysed reaction is 5-amino-1-(5-phospho-D-ribosyl)imidazole-4-carboxylate + L-aspartate + ATP = (2S)-2-[5-amino-1-(5-phospho-beta-D-ribosyl)imidazole-4-carboxamido]succinate + ADP + phosphate + 2 H(+). Its pathway is purine metabolism; IMP biosynthesis via de novo pathway; 5-amino-1-(5-phospho-D-ribosyl)imidazole-4-carboxamide from 5-amino-1-(5-phospho-D-ribosyl)imidazole-4-carboxylate: step 1/2. The chain is Phosphoribosylaminoimidazole-succinocarboxamide synthase from Methanosarcina acetivorans (strain ATCC 35395 / DSM 2834 / JCM 12185 / C2A).